The sequence spans 311 residues: Olfactory receptor 8G1 (311 aa).

Residues 1 to 25 (MSGENNSSVTEFILAGLSEQPELQL) lie on the Extracellular side of the membrane. 2 N-linked (GlcNAc...) asparagine glycosylation sites follow: Asn-5 and Asn-6. A helical membrane pass occupies residues 26–46 (PLFLLFLGIYVVTVVGNLGMT). Residues 47–54 (TLIWLSSH) lie on the Cytoplasmic side of the membrane. Residues 55 to 75 (LHTPMYYFLSSLSFIDFCHST) form a helical membrane-spanning segment. Topologically, residues 76–99 (VITPKMLVNFVTEKNIISYPECMT) are extracellular. Cys-97 and Cys-189 form a disulfide bridge. Residues 100–120 (QLYFFLVFAIAECHMLAAMAY) traverse the membrane as a helical segment. The Cytoplasmic segment spans residues 121–139 (DRYMAICSPLLYSVIISNK). A helical membrane pass occupies residues 140-160 (ACFSLILGVYIIGLVCASVHT). Topologically, residues 161-197 (GCMFRVQFCKFDLINHYFCDLLPLLKLSCSSIYVNKL) are extracellular. Residues 198 to 217 (LILCVGAFNILVPSLTILCS) traverse the membrane as a helical segment. At 218–237 (YIFIIASILHIRSTEGRSKA) the chain is on the cytoplasmic side. A helical transmembrane segment spans residues 238 to 258 (FSTCSSHMLAVVIFFGSAAFM). Topologically, residues 259–271 (YLQPSSISSMDQG) are extracellular. A helical membrane pass occupies residues 272 to 292 (KVSSVFYTIIVPMLNPLIYSL). The Cytoplasmic segment spans residues 293 to 311 (RNKDVHVSLKKMLQRRTLL).

Belongs to the G-protein coupled receptor 1 family.

The protein localises to the cell membrane. Functionally, odorant receptor. The protein is Olfactory receptor 8G1 (OR8G1) of Homo sapiens (Human).